We begin with the raw amino-acid sequence, 144 residues long: MKLMGLDVGSRTVGVAISDAFGWTAQGVEIIRINEDAEEFGIDRVAELVEELDAGGFVLGLPKNMNNTLGPRAEAAQHYGELLTARFHLPVDFEDERLTTVEAERMLVEEANTSRKKRKKVIDKLAASLILQNYLDRHGKLTQE.

The protein belongs to the YqgF nuclease family.

It localises to the cytoplasm. Could be a nuclease involved in processing of the 5'-end of pre-16S rRNA. This Lactiplantibacillus plantarum (strain ATCC BAA-793 / NCIMB 8826 / WCFS1) (Lactobacillus plantarum) protein is Putative pre-16S rRNA nuclease.